The chain runs to 616 residues: Putative L-type lectin-domain containing receptor kinase I.10 (616 aa).

Residues 1–22 form the signal peptide; that stretch reads MAWGLFQILMISFFHLIKLSSQ. The Extracellular portion of the chain corresponds to 23 to 288; the sequence is QETSFVYETF…RAEHKNLSPL (266 aa). The tract at residues 24-258 is legume-lectin like; that stretch reads ETSFVYETFR…YQYVLSWSFS (235 aa). Residues Asn56, Asn124, Asn181, Asn204, and Asn225 are each glycosylated (N-linked (GlcNAc...) asparagine). Residues 289 to 309 traverse the membrane as a helical segment; the sequence is FIDLLGFLAIMGLCTLTGMYF. The Cytoplasmic portion of the chain corresponds to 310–616; sequence FKRGKYAEIT…SAASSATNSP (307 aa). In terms of domain architecture, Protein kinase spans 343–616; it reads FHKDGFLGKG…SAASSATNSP (274 aa). ATP contacts are provided by residues 349–357 and Lys371; that span reads LGKGGFGEV. Asp467 acts as the Proton acceptor in catalysis.

The protein in the C-terminal section; belongs to the protein kinase superfamily. Ser/Thr protein kinase family. This sequence in the N-terminal section; belongs to the leguminous lectin family.

The protein localises to the cell membrane. The enzyme catalyses L-seryl-[protein] + ATP = O-phospho-L-seryl-[protein] + ADP + H(+). The catalysed reaction is L-threonyl-[protein] + ATP = O-phospho-L-threonyl-[protein] + ADP + H(+). The polypeptide is Putative L-type lectin-domain containing receptor kinase I.10 (LECRK110) (Arabidopsis thaliana (Mouse-ear cress)).